A 131-amino-acid chain; its full sequence is Profilin-3 (131 aa).

This sequence belongs to the profilin family. As to quaternary structure, occurs in many kinds of cells as a complex with monomeric actin in a 1:1 ratio.

It is found in the cytoplasm. The protein localises to the cytoskeleton. Functionally, binds to actin and affects the structure of the cytoskeleton. At high concentrations, profilin prevents the polymerization of actin, whereas it enhances it at low concentrations. By binding to PIP2, it inhibits the formation of IP3 and DG. The sequence is that of Profilin-3 from Malus domestica (Apple).